Here is an 86-residue protein sequence, read N- to C-terminus: Putative membrane protein insertion efficiency factor (86 aa).

Residues 64–86 (GVDPVPKKSSSKTSTTACGCGHS) are disordered. Positions 70 to 79 (KKSSSKTSTT) are enriched in low complexity.

The protein belongs to the UPF0161 family.

Its subcellular location is the cell inner membrane. Could be involved in insertion of integral membrane proteins into the membrane. This is Putative membrane protein insertion efficiency factor from Janthinobacterium sp. (strain Marseille) (Minibacterium massiliensis).